The sequence spans 81 residues: Photosystem I iron-sulfur center (81 aa).

4Fe-4S ferredoxin-type domains are found at residues 2–31 (VHVV…MVPW) and 39–68 (IASS…IRVY). Residues Cys-11, Cys-14, Cys-17, Cys-21, Cys-48, Cys-51, Cys-54, and Cys-58 each coordinate [4Fe-4S] cluster.

As to quaternary structure, the eukaryotic PSI reaction center is composed of at least 11 subunits. Requires [4Fe-4S] cluster as cofactor.

The protein localises to the plastid. The protein resides in the chloroplast thylakoid membrane. The catalysed reaction is reduced [plastocyanin] + hnu + oxidized [2Fe-2S]-[ferredoxin] = oxidized [plastocyanin] + reduced [2Fe-2S]-[ferredoxin]. Its function is as follows. Apoprotein for the two 4Fe-4S centers FA and FB of photosystem I (PSI); essential for photochemical activity. FB is the terminal electron acceptor of PSI, donating electrons to ferredoxin. The C-terminus interacts with PsaA/B/D and helps assemble the protein into the PSI complex. Required for binding of PsaD and PsaE to PSI. PSI is a plastocyanin/cytochrome c6-ferredoxin oxidoreductase, converting photonic excitation into a charge separation, which transfers an electron from the donor P700 chlorophyll pair to the spectroscopically characterized acceptors A0, A1, FX, FA and FB in turn. The polypeptide is Photosystem I iron-sulfur center (Cyanidium caldarium (Red alga)).